Reading from the N-terminus, the 447-residue chain is MSNRIISILKKRLARKTWDNWFTTFQVKKVTDDKIIFSVGNLFIKDWLQSKYGSVISKAIKEAYGKNLDYEIVYETTEPEAFNKSNESYKGPLVKKKPLLISNLNANYTFENFVVGPENRVLYEVSLEISRNPGRYNPFFVYGMVGLGKTHLLQAIAHKIMELHPEMRVLYITSEQFMNDMIDSIKYGSVRDFREHYRKKADVLLIDDIQFLIGKNGVQKELFHTFNELYDAGKQIVICSDRNPEELNGFHDRLVSRFQMGMVMEICPPEKDTRFKIAKKFAERESVSLPDDVAQLLADSVDGNLRILRGVIIKLIVQSSINKERIGAALTNQILAAFNKTTVSIKRMKEEDLIMSTIEAVMGVSPEEIKGTSRKQNIVLSRQLLMYILKRHHGKSIKEISKITGKRHSTVIHSIKKIEMSVIKGNTVVKEKLAKILNTMATSSAAG.

The tract at residues 1–66 is domain I, interacts with DnaA modulators; that stretch reads MSNRIISILK…SKAIKEAYGK (66 aa). The segment at 66-102 is domain II; sequence KNLDYEIVYETTEPEAFNKSNESYKGPLVKKKPLLIS. The interval 103–319 is domain III, AAA+ region; the sequence is NLNANYTFEN…GVIIKLIVQS (217 aa). ATP-binding residues include G146, G148, K149, and T150. The segment at 320-447 is domain IV, binds dsDNA; the sequence is SINKERIGAA…NTMATSSAAG (128 aa).

This sequence belongs to the DnaA family. Oligomerizes as a right-handed, spiral filament on DNA at oriC.

It localises to the cytoplasm. In terms of biological role, plays an essential role in the initiation and regulation of chromosomal replication. ATP-DnaA binds to the origin of replication (oriC) to initiate formation of the DNA replication initiation complex once per cell cycle. Binds the DnaA box (a 9 base pair repeat at the origin) and separates the double-stranded (ds)DNA. Forms a right-handed helical filament on oriC DNA; dsDNA binds to the exterior of the filament while single-stranded (ss)DNA is stabiized in the filament's interior. The ATP-DnaA-oriC complex binds and stabilizes one strand of the AT-rich DNA unwinding element (DUE), permitting loading of DNA polymerase. After initiation quickly degrades to an ADP-DnaA complex that is not apt for DNA replication. Binds acidic phospholipids. The sequence is that of Chromosomal replication initiator protein DnaA from Kosmotoga olearia (strain ATCC BAA-1733 / DSM 21960 / TBF 19.5.1).